The primary structure comprises 569 residues: Sulfite reductase [NADPH] hemoprotein beta-component (569 aa).

[4Fe-4S] cluster contacts are provided by Cys433, Cys439, Cys478, and Cys482. Cys482 contributes to the siroheme binding site.

This sequence belongs to the nitrite and sulfite reductase 4Fe-4S domain family. As to quaternary structure, alpha(8)-beta(8). The alpha component is a flavoprotein, the beta component is a hemoprotein. Siroheme is required as a cofactor. [4Fe-4S] cluster serves as cofactor.

It carries out the reaction hydrogen sulfide + 3 NADP(+) + 3 H2O = sulfite + 3 NADPH + 4 H(+). It participates in sulfur metabolism; hydrogen sulfide biosynthesis; hydrogen sulfide from sulfite (NADPH route): step 1/1. Component of the sulfite reductase complex that catalyzes the 6-electron reduction of sulfite to sulfide. This is one of several activities required for the biosynthesis of L-cysteine from sulfate. The protein is Sulfite reductase [NADPH] hemoprotein beta-component of Buchnera aphidicola subsp. Acyrthosiphon pisum (strain Tuc7).